Consider the following 167-residue polypeptide: Dual specificity protein phosphatase 1B (167 aa).

The Tyrosine-protein phosphatase domain maps to 24–165 (DLSEIQQGLF…LQQFEKSIQG (142 aa)). Cysteine 109 serves as the catalytic Phosphocysteine intermediate.

It belongs to the protein-tyrosine phosphatase family. Non-receptor class dual specificity subfamily. As to quaternary structure, associates with MPK3 and MPK6. Interacts with MPK6 is promoted during HR-like responses triggered by fungal elicitors, whereas interaction with MPK3 in repressed. As to expression, expressed in flowers, seedlings, roots, leaves, and seeds. Present in stomata and meristematic cells.

Its subcellular location is the nucleus. It localises to the cytoplasm. It catalyses the reaction O-phospho-L-tyrosyl-[protein] + H2O = L-tyrosyl-[protein] + phosphate. It carries out the reaction O-phospho-L-seryl-[protein] + H2O = L-seryl-[protein] + phosphate. The catalysed reaction is O-phospho-L-threonyl-[protein] + H2O = L-threonyl-[protein] + phosphate. In terms of biological role, has a dual specificity toward Ser/Thr and Tyr-containing proteins. Prevents biotic and abiotic stress responses, including ozone, oxidative stress and pathogen attacks; represses MAPK activities during hypersensitive response to limit the spread of the HR response after infection by necrotrophic pathogen such as Botrytis cinerea. May be also involved in ABA and salt responses. Dephosphorylates MPK3 and MPK6. The sequence is that of Dual specificity protein phosphatase 1B (DSPTP1B) from Arabidopsis thaliana (Mouse-ear cress).